Here is a 339-residue protein sequence, read N- to C-terminus: Vomeronasal type-1 receptor A14 (339 aa).

Residues 1–42 (MMGVQICQGMMSEIPFFSPPPQFSYMMNKNIRLHTDSNIRNT) lie on the Extracellular side of the membrane. The chain crosses the membrane as a helical span at residues 43 to 63 (FFTDIGIGISANSLLLLFNIF). Over 64 to 75 (KLTRGQRSRLTD) the chain is Cytoplasmic. The chain crosses the membrane as a helical span at residues 76 to 96 (LPIGLLSLINLLMLLMAAFIA). Topologically, residues 97 to 119 (TDTFISWKGWDDIICKFLVYLYR) are extracellular. An intrachain disulfide couples cysteine 111 to cysteine 198. Residues 120 to 140 (TFRGLSLCTSCLLSVLQAIIL) traverse the membrane as a helical segment. At 141-160 (SPRSSCLAKFKHKPPHHISC) the chain is on the cytoplasmic side. Residues 161 to 181 (AILSLSVLYMFIGSHLLVSII) traverse the membrane as a helical segment. The Extracellular segment spans residues 182 to 213 (ATPNLTTNDFIHVTQSCSILPMSYLMQCMFST). Asparagine 185 is a glycosylation site (N-linked (GlcNAc...) asparagine). A helical transmembrane segment spans residues 214-234 (LLAIRDVFLISLMVLSTWYMV). Residues 235 to 264 (ALLCRHRKQTRHLQGTSLSPKASPEQRATR) are Cytoplasmic-facing. The helical transmembrane segment at 265–285 (SILMLMSLFVLMSVFDSIVCS) threads the bilayer. At 286-296 (SRTMYLNDPIS) the chain is on the extracellular side. Residues 297 to 317 (YSIQLFMVHIYATVSPFVFIV) traverse the membrane as a helical segment. At 318-339 (TEKHIVNFLRSVCEGDECLNIH) the chain is on the cytoplasmic side.

The protein belongs to the G-protein coupled receptor 1 family.

It is found in the cell membrane. Functionally, putative pheromone receptor implicated in the regulation of social as well as reproductive behavior. The protein is Vomeronasal type-1 receptor A14 of Rattus norvegicus (Rat).